The sequence spans 238 residues: Ribonuclease PH (238 aa).

Residues Arg-86 and 124–126 each bind phosphate; that span reads GTR.

It belongs to the RNase PH family. In terms of assembly, homohexameric ring arranged as a trimer of dimers.

The enzyme catalyses tRNA(n+1) + phosphate = tRNA(n) + a ribonucleoside 5'-diphosphate. Phosphorolytic 3'-5' exoribonuclease that plays an important role in tRNA 3'-end maturation. Removes nucleotide residues following the 3'-CCA terminus of tRNAs; can also add nucleotides to the ends of RNA molecules by using nucleoside diphosphates as substrates, but this may not be physiologically important. Probably plays a role in initiation of 16S rRNA degradation (leading to ribosome degradation) during starvation. The polypeptide is Ribonuclease PH (Rhizorhabdus wittichii (strain DSM 6014 / CCUG 31198 / JCM 15750 / NBRC 105917 / EY 4224 / RW1) (Sphingomonas wittichii)).